Consider the following 266-residue polypeptide: Glucosamine-6-phosphate deaminase (266 aa).

The active-site Proton acceptor; for enolization step is the Asp72. The active-site For ring-opening step is Asp141. His143 (proton acceptor; for ring-opening step) is an active-site residue. Glu148 functions as the For ring-opening step in the catalytic mechanism.

It belongs to the glucosamine/galactosamine-6-phosphate isomerase family. NagB subfamily. As to quaternary structure, homohexamer.

The enzyme catalyses alpha-D-glucosamine 6-phosphate + H2O = beta-D-fructose 6-phosphate + NH4(+). It participates in amino-sugar metabolism; N-acetylneuraminate degradation; D-fructose 6-phosphate from N-acetylneuraminate: step 5/5. Allosterically activated by N-acetylglucosamine 6-phosphate (GlcNAc6P). In terms of biological role, catalyzes the reversible isomerization-deamination of glucosamine 6-phosphate (GlcN6P) to form fructose 6-phosphate (Fru6P) and ammonium ion. This is Glucosamine-6-phosphate deaminase from Enterobacter sp. (strain 638).